Reading from the N-terminus, the 652-residue chain is Probable endo-1,3(4)-beta-glucanase AFUB_029980 (652 aa).

The N-terminal stretch at Met1–Ala21 is a signal peptide. A GH16 domain is found at Glu36–Thr289. Asn64 is a glycosylation site (N-linked (GlcNAc...) asparagine). Glu145 (nucleophile) is an active-site residue. Glu150 (proton donor) is an active-site residue. Asn200 and Asn208 each carry an N-linked (GlcNAc...) asparagine glycan. Residues Asn379–Thr423 are disordered. Residues Thr390–Ala410 show a composition bias toward polar residues. Residue Asn453 is glycosylated (N-linked (GlcNAc...) asparagine). A disordered region spans residues Ser509–Pro551. Residues Asp529 to Glu540 are compositionally biased toward acidic residues. Asn630 carries the GPI-anchor amidated asparagine lipid modification. The propeptide at Gly631–Ala652 is removed in mature form.

Belongs to the glycosyl hydrolase 16 family.

It is found in the cell membrane. It catalyses the reaction Endohydrolysis of (1-&gt;3)- or (1-&gt;4)-linkages in beta-D-glucans when the glucose residue whose reducing group is involved in the linkage to be hydrolyzed is itself substituted at C-3.. Functionally, mixed-linked glucanase involved in the degradation of complex natural cellulosic substrates. In Aspergillus fumigatus (strain CBS 144.89 / FGSC A1163 / CEA10) (Neosartorya fumigata), this protein is Probable endo-1,3(4)-beta-glucanase AFUB_029980.